We begin with the raw amino-acid sequence, 160 residues long: UPF0262 protein Mrad2831_3513 (160 aa).

It belongs to the UPF0262 family.

The chain is UPF0262 protein Mrad2831_3513 from Methylobacterium radiotolerans (strain ATCC 27329 / DSM 1819 / JCM 2831 / NBRC 15690 / NCIMB 10815 / 0-1).